We begin with the raw amino-acid sequence, 67 residues long: UPF0337 protein SP_1805 (67 aa).

The tract at residues 1 to 30 is disordered; the sequence is MSVEEKLNQAKGSIKEGVGKAIGDEKMEKE.

This sequence belongs to the UPF0337 (CsbD) family.

The chain is UPF0337 protein SP_1805 from Streptococcus pneumoniae serotype 4 (strain ATCC BAA-334 / TIGR4).